We begin with the raw amino-acid sequence, 48 residues long: ATP synthase protein 8 (48 aa).

Residues 16-36 (GFLLMTILLVLFSQFFLPMIL) traverse the membrane as a helical segment.

The protein belongs to the ATPase protein 8 family. F-type ATPases have 2 components, CF(1) - the catalytic core - and CF(0) - the membrane proton channel.

It is found in the mitochondrion membrane. In terms of biological role, mitochondrial membrane ATP synthase (F(1)F(0) ATP synthase or Complex V) produces ATP from ADP in the presence of a proton gradient across the membrane which is generated by electron transport complexes of the respiratory chain. F-type ATPases consist of two structural domains, F(1) - containing the extramembraneous catalytic core and F(0) - containing the membrane proton channel, linked together by a central stalk and a peripheral stalk. During catalysis, ATP synthesis in the catalytic domain of F(1) is coupled via a rotary mechanism of the central stalk subunits to proton translocation. Part of the complex F(0) domain. Minor subunit located with subunit a in the membrane. The sequence is that of ATP synthase protein 8 (ATP8) from Vanderwaltozyma polyspora (strain ATCC 22028 / DSM 70294 / BCRC 21397 / CBS 2163 / NBRC 10782 / NRRL Y-8283 / UCD 57-17) (Kluyveromyces polysporus).